Consider the following 497-residue polypeptide: Tryptophan decarboxylase 2 (497 aa).

Residues A162, S163, T257, and N311 each contribute to the pyridoxal 5'-phosphate site. Position 314 is an N6-(pyridoxal phosphate)lysine (K314).

Belongs to the group II decarboxylase family. Pyridoxal 5'-phosphate serves as cofactor.

It carries out the reaction L-tryptophan + H(+) = tryptamine + CO2. Involved in serotonin biosynthesis. Catalyzes the decarboxylation of L-tryptophan to tryptamine, which is converted to serotonin by tryptamine 5-hydroxylase. May play a minor role in serotonin biosynthetis during senescence. Accumulation of serotonin attenuates leaf senescence. In Oryza sativa subsp. japonica (Rice), this protein is Tryptophan decarboxylase 2.